The following is a 586-amino-acid chain: Phosphomethylpyrimidine synthase (586 aa).

Residues 1-59 are disordered; sequence MKQSVSAEQIELKSSLPGSKKVYVDGPREGMKVPMREIEQSDTNGVPNPPIRVYDTSGP. The span at 22–39 shows a compositional bias: basic and acidic residues; it reads VYVDGPREGMKVPMREIE. Substrate is bound by residues asparagine 193, methionine 222, tyrosine 251, histidine 287, 307–309, 348–351, and glutamate 387; these read SRG and DGLR. Position 391 (histidine 391) interacts with Zn(2+). Tyrosine 414 lines the substrate pocket. Histidine 455 serves as a coordination point for Zn(2+). [4Fe-4S] cluster is bound by residues cysteine 535, cysteine 538, and cysteine 543.

The protein belongs to the ThiC family. The cofactor is [4Fe-4S] cluster.

The enzyme catalyses 5-amino-1-(5-phospho-beta-D-ribosyl)imidazole + S-adenosyl-L-methionine = 4-amino-2-methyl-5-(phosphooxymethyl)pyrimidine + CO + 5'-deoxyadenosine + formate + L-methionine + 3 H(+). It functions in the pathway cofactor biosynthesis; thiamine diphosphate biosynthesis. Its function is as follows. Catalyzes the synthesis of the hydroxymethylpyrimidine phosphate (HMP-P) moiety of thiamine from aminoimidazole ribotide (AIR) in a radical S-adenosyl-L-methionine (SAM)-dependent reaction. In Bacillus cereus (strain Q1), this protein is Phosphomethylpyrimidine synthase.